The sequence spans 329 residues: MTKIYDAANWSKHEDDFTQMFYNQNVKQFWLPEEIALNGDLLTWKYLGKNEQDTYMKVLAGLTLLDTEQGNTGMPIVAEHVDGHQRKAVLNFMAMMENAVHAKSYSNIFLTLAPTEQINEVFEWVKNNRFLQKKARTIVSVYKTIKKNDEISLFKGMVASVFLESFLFYSGFYYPLYFYGQGKLMQSGEIINLIIRDEAIHGVYVGLLAQEIYKKQTPQKQKELYAWALNLLQELYENELEYTEDVYDQVGLAPDVKKFIRYNANKALNNLGFDHWFEEEDVNPIVINGLNTKTKSHDFFSTKGNGYKKATVEPLKDSDFIFTEKGCIQ.

Fe cation is bound by residues aspartate 66, glutamate 97, and histidine 101. Residue tyrosine 105 is part of the active site. The Fe cation site is built by glutamate 164, glutamate 198, and histidine 201.

It belongs to the ribonucleoside diphosphate reductase small chain family. As to quaternary structure, tetramer of two alpha and two beta subunits. The cofactor is Fe cation.

It catalyses the reaction a 2'-deoxyribonucleoside 5'-diphosphate + [thioredoxin]-disulfide + H2O = a ribonucleoside 5'-diphosphate + [thioredoxin]-dithiol. Functionally, provides the precursors necessary for DNA synthesis. Catalyzes the biosynthesis of deoxyribonucleotides from the corresponding ribonucleotides. This Bacillus pumilus (Bacillus mesentericus) protein is Ribonucleoside-diphosphate reductase subunit beta (bnrdF).